The sequence spans 63 residues: Large ribosomal subunit protein bL35 (63 aa).

It belongs to the bacterial ribosomal protein bL35 family.

This Campylobacter curvus (strain 525.92) protein is Large ribosomal subunit protein bL35.